Here is a 393-residue protein sequence, read N- to C-terminus: Cell division protein FtsZ 2 (393 aa).

The interval 1 to 28 (MQDIVQDALDNAEAEQREMDGDGDGDEF) is disordered. GTP-binding positions include 40 to 44 (GAGNN), 127 to 129 (GTG), Glu-158, Arg-161, and Asp-204. Residues 339–393 (GPSTQKQADKSRRELQDVDSKQRAADDAGAGGFGGAHSDGGQDEVEQENGLDVIR) form a disordered region. Residues 345–364 (QADKSRRELQDVDSKQRAAD) show a composition bias toward basic and acidic residues. The span at 367–376 (GAGGFGGAHS) shows a compositional bias: gly residues.

Belongs to the FtsZ family. Homodimer. Polymerizes to form a dynamic ring structure in a strictly GTP-dependent manner. Interacts directly with several other division proteins.

The protein resides in the cytoplasm. In terms of biological role, essential cell division protein that forms a contractile ring structure (Z ring) at the future cell division site. The regulation of the ring assembly controls the timing and the location of cell division. One of the functions of the FtsZ ring is to recruit other cell division proteins to the septum to produce a new cell wall between the dividing cells. Binds GTP and shows GTPase activity. Overexpression causes significant changes in cell morphology. This chain is Cell division protein FtsZ 2, found in Halobacterium salinarum (strain ATCC 29341 / DSM 671 / R1).